A 602-amino-acid chain; its full sequence is MTRAILPDVSPDSIDPQFLEEKYDQERLKRINAAGYAKYSEVGDGELERFKVTHRLEDVASSREPVSVDTDVVIIGAGYAGILTAVRLVQNGILNFRIVEKGNGFGGTWYWNQYPGAQCDVESYIYMPLLEETGYVPTERYARGPEILKHINLIAKKWELAPKTHFQSEVSAADWTADRWTVKTRQGDEFRSRYLVTAIGPFHRPKLPGVPGINSFKGNTFHSSGWDYEASGGSATEKLTKFSDKTIGIIGTGATAVQMLPFVANSAKEVLVFQRTPAPVNVRNNGPTPPDFAKFLEPGWQLRRMDNFNKIYTGEPIDTSIVSEEWLSATLQVLFGTESDKPSDPAELEQLLARTDFQVMERIRRRVDETIKDPVTREQLKPWYATICKRPCFHDEYLECFNRPNVRLVDTDGKGVDRITEDSVVVDGKEHHVDALVFCTGFEYLSGVDRHGGFTVTGKDGVTLTERWTPGPSTYHGLYVHGFPNFFCLQTAQAGTNPNFMYTATTGSTQIGHVIAECLKDGVREVQPTKQAEDDWVKMILEGGRGMMHLMRNCTPGYMNNDGNLDEKTARRMFYPGGPTAWRKLLEAWREKGDFEGLQRTY.

FAD is bound by residues 108–111 (TWYW), 120–121 (DV), and Y126. Residue 118–120 (QCD) participates in NADP(+) binding. NADP(+)-binding positions include 252-258 (TGATAVQ) and 275-276 (RT).

Belongs to the FAD-binding monooxygenase family. It depends on FAD as a cofactor.

Its pathway is secondary metabolite biosynthesis. Functionally, FAD-binding monooxygenase; part of the gene cluster that mediates the biosynthesis of hypothemycin, a resorcylic acid lactone (RAL) that irreversibly inhibits a subset of protein kinases with a conserved cysteine in the ATP binding site such as human ERK2. The first step is performed by both PKSs hmp3 and hmp8 and leads to the production of 7',8'-dehydrozearalenol (DHZ). The highly reducing PKS hpm8 synthesizes the reduced hexaketide (7S,11S,2E,8E)-7,11-dihydroxy-dodeca-2,8-dienoate, which is transferred downstream to the non-reducing PKS hpm3. Hpm3 then extends the reduced hexaketide to a nonaketide, after which regioselective cyclization and macrolactonization affords DHZ. The next step is the conversion of DHZ into aigialomycin C and is performed by the O-methyltransferase hmp5, the FAD-binding monooxygenase hmp7, and the cytochrome P450 monooxygenase hmp1. The wide substrate tolerance of the hmp5 and hmp7 implies that the reactions from DHZ to aigialomycin C can occur in any order. The steps from aigialomycin C to hypothemycin are less well established. The FAD-linked oxidoreductase hmp9 presumably catalyzes oxidation of the C-6' hydroxyl to a ketone. The timing of this oxidation is important, since the resulting enone functional group is a Michael acceptor that can react spontaneously with glutathione, an abundant metabolite in fungal cells. The glutathione S-transferase hmp2 catalyzes cis-trans isomerization of the 7',8' double bond with equilibrium favoring the trans isomer. The hpm6-encoded transporter might preferentially pump hypothemycin out of the cell relative to the trans isomer aigialomycin A. The cis-to-trans isomerization may be coupled with C-4' hydroxylation, since all known hypothemycin analogs containing the enone functional group also have hydroxyl groups at both C-4' and C-5'. The sequence is that of FAD-binding monooxygenase hmp7 from Hypomyces subiculosus (Nectria subiculosa).